The chain runs to 418 residues: Probable serine hydroxymethyltransferase (418 aa).

Residues leucine 118 and 122–124 contribute to the (6S)-5,6,7,8-tetrahydrofolate site; that span reads GHL. Position 226 is an N6-(pyridoxal phosphate)lysine (lysine 226). 351-353 contributes to the (6S)-5,6,7,8-tetrahydrofolate binding site; that stretch reads SPF.

The protein belongs to the SHMT family. In terms of assembly, homodimer. Requires pyridoxal 5'-phosphate as cofactor.

It localises to the cytoplasm. The enzyme catalyses (6R)-5,10-methylene-5,6,7,8-tetrahydrofolate + glycine + H2O = (6S)-5,6,7,8-tetrahydrofolate + L-serine. The protein operates within one-carbon metabolism; tetrahydrofolate interconversion. Functionally, catalyzes the reversible interconversion of serine and glycine with tetrahydrofolate (THF) serving as the one-carbon carrier. This reaction serves as the major source of one-carbon groups required for the biosynthesis of purines, thymidylate, methionine, and other important biomolecules. In Mesomycoplasma hyopneumoniae (strain 232) (Mycoplasma hyopneumoniae), this protein is Probable serine hydroxymethyltransferase.